A 513-amino-acid chain; its full sequence is ATP synthase subunit alpha (513 aa).

169–176 serves as a coordination point for ATP; that stretch reads GDRQTGKT.

It belongs to the ATPase alpha/beta chains family. As to quaternary structure, F-type ATPases have 2 components, CF(1) - the catalytic core - and CF(0) - the membrane proton channel. CF(1) has five subunits: alpha(3), beta(3), gamma(1), delta(1), epsilon(1). CF(0) has three main subunits: a(1), b(2) and c(9-12). The alpha and beta chains form an alternating ring which encloses part of the gamma chain. CF(1) is attached to CF(0) by a central stalk formed by the gamma and epsilon chains, while a peripheral stalk is formed by the delta and b chains.

The protein resides in the cell inner membrane. The enzyme catalyses ATP + H2O + 4 H(+)(in) = ADP + phosphate + 5 H(+)(out). In terms of biological role, produces ATP from ADP in the presence of a proton gradient across the membrane. The alpha chain is a regulatory subunit. This is ATP synthase subunit alpha from Hydrogenovibrio crunogenus (strain DSM 25203 / XCL-2) (Thiomicrospira crunogena).